Reading from the N-terminus, the 610-residue chain is MENLISLVNKIQRACTALGDHGENSALPTLWDSLPAIAVVGGQSSGKSSVLESVVGKDFLPRGSGIVTRRPLVLQLHKIDEGSREYAEFLHLPRKRFTDFVAVRKEIQDETDRETGRTKQISSVPIHLSIYSPNVVNLTLIDLPGLTKVAVEGQPDSIVKDIEDMVRSYIEKPNCIILAISPANQDLATSDAIKISREVDPTGDRTIGVLTKIDLMDKGTDAVDILEGRAYRLKFPWIGVVNRSQQDINKNVDMIAARRREREYFNSTPEYKHLANRMGSEHLAKMLSKHLETVIKSKIPGIQSLINKTIAELEAELTRLGKPVAADAGGKLYAIMEICRSFDQIFKDHLDGVRPGGDKIYNVFDNQLPAALKRLQFDKQLSMENIRKLITEADGYQPHLIAPEQGYRRLIESSLITIRGPAESAVDAVHSLLKDLVHKAMSETLDLKQYPGLRVEVGAASVDSLERMRDESKRATLQLVDMECGYLTVDFFRKLPQDVDKGGNPTHSICDRYNDSYLRRIGTTILSYVNMVCATLRHSIPKSIVYCQVREAKRSLLDHFFTELGKMEIKRLSSLLNEDPAIMERRSALAKRLELYRSAQAEIDAVAWSK.

The region spanning 31–300 (WDSLPAIAVV…LETVIKSKIP (270 aa)) is the Dynamin-type G domain. Residues 41-48 (GGQSSGKS) are G1 motif. 44 to 49 (SSGKSS) provides a ligand contact to GTP. Residues 67 to 69 (VTR) are G2 motif. The tract at residues 142-145 (DLPG) is G3 motif. The interval 211-214 (TKID) is G4 motif. GTP-binding positions include 212–217 (KIDLMD) and 242–245 (NRSQ). A G5 motif region spans residues 241 to 244 (VNRS). Residues 518 to 610 (LRRIGTTILS…AEIDAVAWSK (93 aa)) enclose the GED domain.

Belongs to the TRAFAC class dynamin-like GTPase superfamily. Dynamin/Fzo/YdjA family. May homooligomerize and heterooligomerize. May interact with CALS1 and UGT1. As to expression, expressed in seedling root tips and root elongation zones, young root nodules and young leaves.

Its subcellular location is the cytoplasm. It is found in the cytoskeleton. It localises to the phragmoplast. In terms of biological role, microtubule-associated force-producing protein that is targeted to the forming cell plate during cytokinesis. May be involved in attaching Golgi-derived vesicles to microtubules which direct vesicles to the forming cell plate during cytokinesis. Possesses intrinsic GTPase activity in vitro. The polypeptide is Dynamin-related protein 12A (Glycine max (Soybean)).